The primary structure comprises 2515 residues: MEKPVVNVDVDPQSPFVVQLQKSFPQFEVVAQQATPNDHANARAFSHLASKLIELEVPTTATILDIGSAPARRMFSEHQYHCVCPMRSPEDPDRMMKYASKLAEKACKITNKNLHEKIKDLRTVLDTPDAETPSLCFHNDVTCNTRAEYSVMQDVYINAPGTIYHQAMKGVRTLYWIGFDTTQFMFSAMAGSYPAYNTNWADEKVLEARNIGLCSTKLSEGRTGKLSIMRKKELKPGSRVYFSVGSTLYPEHRASLQSWHLPSVFHLKGKQSYTCRCDTVVSCEGYVVKKITISPGITGETVGYAVTNNSEGFLLCKVTDTVKGERVSFPVCTYIPATICDQMTGIMATDISPDDAQKLLVGLNQRIVINGKTNRNTNTMQNYLLPTIAQGFSKWAKERKEDLDNEKMLGTRERKLTYGCLWAFRTKKVHSFYRPPGTQTSVKVPASFSAFPMSSVWTTSLPMSLRQKMKLALQPKKEEKLLQVPEELVMEAKAAFEDAQEEARAEKLREALPPLVADKDIEAAAEVVCEVEGLQADIGAALVETPRGHVRIIPQANDRMIGQYIVVSPTSVLKNAKLAPAHPLADQVKIITHSGRAGRYAVEPYDAKVLMPAGSAVPWPEFLALSESATLVYNEREFVNRKLYHIAMHGPAKNTEEEQYKVTKAELAETEYVFDVDKKRCVKKEEASGLVLSGELTNPPYHELALEGLKTRPAVPYKVETIGVIGTPGSGKSAIIKSTVTARDLVTSGKKENCREIEADVLRLRGMQITSKTVDSVMLNGCHKAVEVLYVDEAFACHAGALLALIAIVRPRKKVVLCGDPKQCGFFNMMQLKVHFNHPERDICTKTFYKFISRRCTQPVTAIVSTLHYDGKMKTTNPCKKNIEIDITGATKPKPGDIILTCFRGWVKQLQIDYPGHEVMTAAASQGLTRKGVYAVRQKVNENALYAITSEHVNVLLTRTEDRLVWKTLQGDPWIKQLTNVPKGNFQATIEDWEAEHKGIIAAINSPAPRTNPFSCKTNVCWAKALEPILATAGIVLTGCQWSELFPQFADDKPHSAIYALDVICIKFFGMDLTSGLFSKQSIPLTYHPADSARPVAHWDNSPGTRKYGYDHAVAAELSRRFPVFQLAGKGTQLDLQTGRTRVISAQHNLVPVNRNLPHALVPEHKEKQPGPVEKFLNQFKHHSVLVVSEEKIEAPHKRIEWIAPIGIAGADKNYNLAFGFPPQARYDLVFINIGTKYRNHHFQQCEDHAATLKTLSRSALNCLNPGGTLVVKSYGYADRNSEDVVTALARKFVRVSAARPECVSSNTEMYLIFRQLDNSRTRQFTPHHLNCVISSVYEGTRDGVGAAPSYRTKRENIADCQEEAVVNAANPLGRPGEGVCRAIYKRWPNSFTDSATETGTAKLTVCHGKKVIHAVGPDFRKHPEAEALKLLQNAYHAVADLVNEHNIKSVAIPLLSTGIYAAGKDRLEVSLNCLTTALDRTDADVTIYCLDKKWKERIDAVLQLKESVTELKDEDMEIDDELVWIHPDSCLKGRKGFSTTKGKLYSYFEGTKFHQAAKDMAEIKVLFPNDQESNEQLCAYILGETMEAIREKCPVDHNPSSSPPKTLPCLCMYAMTPERVHRLRSNNVKEVTVCSSTPLPKYKIKNVQKVQCTKVVLFNPHTPAFVPARKYIEVPEQPAAPPAQDEEAPEAVATPAPPAADNTSLDVTDISLDMDDSSEGSLFSSFSGSDNSITCMDRWSSGPSSLDRRQVVVADVHAVQEPAPIPPPRLKKMARLAAASKTQEEPIPPASTSSADESLHLSFGGVSMSFGSLLDGEMARLAAAQPPATGPTDVPMSFGSFSDGEIEELSRRVTESEPVLFGSFEPGEVNSIISSRSAVSFPLRKQRRRRRSRRTEYXLTGVGGYIFSTDTGPGHLQMKSVLQNQLTEPTLERNVLERIYAPVLDTSKEEQLKLRYQMMPTEANKSRYQSRKVENQKAITTERLLSGLRLYNSATDQPECYKITYPKPSYSSSVAANYSDPKFAVAVCNNYLHENYPTVASYQITDEYDAYLDMVDGTVACLDTATFCPAKLRSYPKRHEYRAPNIRSAVPSAMQNTLQNVLIAATKRNCNVTQMRELPTLDSATFNVECFRKYACNDEYWEEFARKPIRITTEFVTAYVARLKGPKAAALFAKTHNLVPLQEVPMDRFVMDMKRDVKVTPGTKHTEERPKVQVIQAAEPLATAYLCGIHRELVRRLTAVLLPNIHTLFDMSAEDFDAIIAEHFKQGDPVLETDIASFDKSQDDAMALTGLMILEDLGVDQPLLDLIECAFGEISSTHLPTGTRFKFGAMMKSGMFLTLFVNTVLNVVIASRVLEERLKTSKCAAFIGDDNIIHGVVSDKEMAERCATWLNMEVKIIDAVIGERPPYFCGGFILQDSVTSTACRVADPLKRLFKLGKPLPADDEQDEDRRRALLDETKAWFRVGITDTLAVAVATRYEVDNITPVLLALRTFAQSKRAFQAIRGEIKHLYGGPK.

The Alphavirus-like MT domain occupies 30 to 260 (VAQQATPNDH…EHRASLQSWH (231 aa)). A nsP1 membrane-binding region spans residues 245-264 (GSTLYPEHRASLQSWHLPSV). Cys420 carries S-palmitoyl cysteine; by host lipidation. The 156-residue stretch at 695–850 (ELTNPPYHEL…RDICTKTFYK (156 aa)) folds into the (+)RNA virus helicase ATP-binding domain. Residue 726–733 (GTPGSGKS) coordinates a ribonucleoside 5'-triphosphate. In terms of domain architecture, (+)RNA virus helicase C-terminal spans 851–999 (FISRRCTQPV…IEDWEAEHKG (149 aa)). One can recognise a Peptidase C9 domain in the interval 1012 to 1341 (NPFSCKTNVC…CVISSVYEGT (330 aa)). The tract at residues 1013 to 1032 (PFSCKTNVCWAKALEPILAT) is nucleolus localization signal. Cys1021 functions as the For cysteine protease nsP2 activity in the catalytic mechanism. A Nuclear export signal motif is present at residues 1066 to 1075 (IKFFGMDLTS). The active-site For cysteine protease nsP2 activity is the His1098. Positions 1196-1200 (PHKRI) match the Nuclear localization signal motif. A Macro domain is found at 1348-1507 (APSYRTKREN…RIDAVLQLKE (160 aa)). 5 residues coordinate ADP-D-ribose: Asn1371, Gly1379, Gly1459, Ile1460, and Tyr1461. Residues Cys1610, Cys1612, Cys1635, and Cys1653 each coordinate Zn(2+). 2 disordered regions span residues 1678–1705 (QPAAPPAQDEEAPEAVATPAPPAADNTS) and 1777–1797 (LAAASKTQEEPIPPASTSSAD). 2 short sequence motifs (FGDF; binding to host G3BP1) span residues 1839-1842 (FGSF) and 1862-1865 (FGSF). The 116-residue stretch at 2269-2384 (DPVLETDIAS…HGVVSDKEMA (116 aa)) folds into the RdRp catalytic domain.

In terms of assembly, interacts with non-structural protein 3. Interacts with RNA-directed RNA polymerase nsP4. Interacts with protease nsP2. interacts with itself. As to quaternary structure, interacts with mRNA-capping enzyme nsP1. Interacts with host DDX1. Interacts with host DDX3. Interacts (via C-terminus) with host G3BP1; this interaction inhibits the formation of host stress granules on viral mRNAs and the nsp3-G3BP1 complexes bind viral RNAs and probably orchestrate the assembly of viral replication complexes. Interacts (via C-terminus) with host G3BP2; this interaction inhibits the formation of host stress granules on viral mRNAs and the nsp3-G3BP2 complexes bind viral RNAs and probably orchestrate the assembly of viral replication complexes. Interacts with mRNA-capping enzyme nsP1. Interacts with protease nsP2. interacts with itself. In terms of assembly, interacts with RNA-directed RNA polymerase nsP4. Interacts with mRNA-capping enzyme nsP1. Interacts with KPNA1/karyopherin-alpha1; this interaction probably allows the active transport of protease nsP2 into the host nucleus. Mg(2+) is required as a cofactor. Mn(2+) serves as cofactor. Post-translationally, specific enzymatic cleavages in vivo yield mature proteins. The processing of the polyprotein is temporally regulated. In early stages (1.7 hpi), P1234 is first cleaved in trans through its nsP2 protease activity, releasing P123' and nsP4, which associate to form the early replication complex. At the same time, P1234 is also cut at the nsP1/nsP2 site early in infection but with lower efficiency. After replication of the viral minus-strand RNAs (4 hpi), the polyproteins are cut at the nsP1/nsP2 and nsP2/nsP3 sites very efficiently, preventing accumulation of P123' and P1234 and allowing the formation of the late replication complex. NsP3'/nsP4 site is not cleaved anymore and P34 is produced rather than nsP4. Specific enzymatic cleavages in vivo yield mature proteins. The processing of the polyprotein is temporally regulated. In early stages (1.7 hpi), P123 is cleaved at the nsP1/nsP2 site with low efficiency. After replication of the viral minus-strand RNAs (4 hpi), the polyproteins are cut at the nsP1/nsP2 and nsP2/nsP3 sites very efficiently, preventing accumulation of P123 and allowing the formation of the late replication complex. In terms of processing, specific enzymatic cleavages in vivo yield mature proteins. The processing of the polyprotein is temporally regulated. In early stages (1.7 hpi), P123' is cleaved at the nsP1/nsP2 site with low efficiency. After replication of the viral minus-strand RNAs (4 hpi), the polyproteins are cut at the nsP1/nsP2 and nsP2/nsP3 sites very efficiently, preventing accumulation of P123' and allowing the formation of the late replication complex. Post-translationally, palmitoylated by host palmitoyltransferases ZDHHC2 and ZDHHC19. Phosphorylated by host on serines and threonines. In terms of processing, ubiquitinated; targets the protein for rapid degradation via the ubiquitin system. Nsp4 is present in extremely low quantities due to low frequency of translation through the amber stop-codon and the degradation by the ubiquitin pathway.

The protein localises to the host cytoplasmic vesicle membrane. Its subcellular location is the host cell membrane. It is found in the host cell projection. The protein resides in the host filopodium. It localises to the host nucleus. The protein localises to the host cytoplasm. It carries out the reaction GTP + S-adenosyl-L-methionine = N(7)-methyl-GTP + S-adenosyl-L-homocysteine. The enzyme catalyses N(7)-methyl-GTP + L-histidyl-[protein] = N(tele)-(N(7)-methylguanosine 5'-phospho)-L-histidyl-[protein] + diphosphate. The catalysed reaction is N(tele)-(N(7)-methylguanosine 5'-phospho)-L-histidyl-[protein] + a 5'-end diphospho-(purine-ribonucleoside) in mRNA + H(+) = a 5'-end (N(7)-methyl 5'-triphosphoguanosine)-(purine-ribonucleoside) in mRNA + L-histidyl-[protein]. It catalyses the reaction a 5'-end triphospho-ribonucleoside in mRNA + H2O = a 5'-end diphospho-ribonucleoside in mRNA + phosphate + H(+). It carries out the reaction a ribonucleoside 5'-triphosphate + H2O = a ribonucleoside 5'-diphosphate + phosphate + H(+). The enzyme catalyses ATP + H2O = ADP + phosphate + H(+). The catalysed reaction is RNA(n) + a ribonucleoside 5'-triphosphate = RNA(n+1) + diphosphate. It catalyses the reaction RNA(n) + ATP = RNA(n)-3'-adenine ribonucleotide + diphosphate. It carries out the reaction 4-O-(ADP-D-ribosyl)-L-aspartyl-[protein] + H2O = L-aspartyl-[protein] + ADP-D-ribose + H(+). The enzyme catalyses 5-O-(ADP-D-ribosyl)-L-glutamyl-[protein] + H2O = L-glutamyl-[protein] + ADP-D-ribose + H(+). The catalysed reaction is ADP-alpha-D-ribose 1''-phosphate + H2O = ADP-D-ribose + phosphate. Its function is as follows. Inactive precursor of the viral replicase, which is activated by cleavages carried out by the viral protease nsP2. The early replication complex formed by the polyprotein P123 and nsP4 synthesizes minus-strand RNAs. As soon P123 is cleaved into mature proteins, the plus-strand RNAs synthesis begins. In terms of biological role, the early replication complex formed by the polyprotein P123' and nsP4 synthesizes minus-strand RNAs. Polyprotein P123' is a short-lived polyprotein that accumulates during early stage of infection. As soon P123' is cleaved into mature proteins, the plus-strand RNAs synthesis begins. Functionally, cytoplasmic capping enzyme that catalyzes two virus-specific reactions: methyltransferase and nsP1 guanylyltransferase. mRNA-capping is necessary since all viral RNAs are synthesized in the cytoplasm, and host capping enzymes are restricted to the nucleus. The enzymatic reaction involves a covalent link between 7-methyl-GMP and nsP1, whereas eukaryotic capping enzymes form a covalent complex only with GMP. nsP1 capping consists in the following reactions: GTP is first methylated into 7-methyl-GMP and then is covalently linked to nsP1 to form the m7GMp-nsP1 complex from which 7-methyl-GMP complex is transferred to the mRNA to create the cap structure. NsP1 is needed for the initiation of the minus-strand RNAs synthesis. Probably serves as a membrane anchor for the replication complex composed of nsP1-nsP4. Palmitoylated nsP1 is remodeling host cell cytoskeleton, and induces filopodium-like structure formation at the surface of the host cell. Interacts with host TMEM45B; this interaction leads to viral replication inhibition. Its function is as follows. Multifunctional protein whose N-terminus is part of the RNA polymerase complex and displays NTPase, RNA triphosphatase and helicase activities. NTPase and RNA triphosphatase are involved in viral RNA capping and helicase keeps a check on the dsRNA replication intermediates. The C-terminus harbors a protease that specifically cleaves the polyproteins and releases the mature proteins. Required for the shutoff of minus-strand RNAs synthesis. Specifically inhibits the host IFN response by promoting the nuclear export of host STAT1. Also inhibits host transcription by inducing rapid proteasome-dependent degradation of POLR2A, a catalytic subunit of the RNAPII complex. The resulting inhibition of cellular protein synthesis serves to ensure maximal viral gene expression and to evade host immune response. Seems to be essential for minus-strand RNAs and subgenomic 26S mRNAs synthesis. Displays mono-ADP-ribosylhydrolase activity. ADP-ribosylation is a post-translational modification that controls various processes of the host cell and the virus probably needs to revert it for optimal viral replication. Binds proteins of FXR family and sequesters them into the viral RNA replication complexes thereby inhibiting the formation of host stress granules on viral mRNAs. The nsp3'-FXR complexes bind viral RNAs and probably orchestrate the assembly of viral replication complexes, thanks to the ability of FXR family members to self-assemble and bind DNA. In terms of biological role, seems to be essential for minus-strand RNAs and subgenomic 26S mRNAs synthesis. Displays mono-ADP-ribosylhydrolase activity. ADP-ribosylation is a post-translantional modification that controls various processes of the host cell and the virus probably needs to revert it for optimal viral replication. Binds proteins of G3BP family and sequesters them into the viral RNA replication complexes thereby inhibiting the formation of host stress granules on viral mRNAs. The nsp3-G3BP complexes bind viral RNAs and probably orchestrate the assembly of viral replication complexes, thanks to the ability of G3BP family members to self-assemble and bind DNA. Functionally, RNA dependent RNA polymerase. Replicates genomic and antigenomic RNA by recognizing replications specific signals. The early replication complex formed by the polyprotein P123 and nsP4 synthesizes minus-strand RNAs. The late replication complex composed of fully processed nsP1-nsP4 is responsible for the production of genomic and subgenomic plus-strand RNAs. The core catalytic domain of nsP4 also possesses terminal adenylyltransferase (TATase) activity that is probably involved in maintenance and repair of the poly(A) tail, an element required for replication of the viral genome. Interacts with host TMEM45B; this interaction leads to viral replication inhibition. The chain is Polyprotein P1234 from Acrocephalus scirpaceus (Eurasian reed-warbler).